The primary structure comprises 278 residues: Dermonecrotic toxin LhSicTox-alphaIV1iii (278 aa).

The active site involves His5. Mg(2+) contacts are provided by Glu25 and Asp27. The active-site Nucleophile is His41. 2 cysteine pairs are disulfide-bonded: Cys45–Cys51 and Cys47–Cys192. Residue Asp85 participates in Mg(2+) binding.

The protein belongs to the arthropod phospholipase D family. Class II subfamily. Mg(2+) is required as a cofactor. Expressed by the venom gland.

The protein localises to the secreted. The catalysed reaction is an N-(acyl)-sphingosylphosphocholine = an N-(acyl)-sphingosyl-1,3-cyclic phosphate + choline. It carries out the reaction an N-(acyl)-sphingosylphosphoethanolamine = an N-(acyl)-sphingosyl-1,3-cyclic phosphate + ethanolamine. The enzyme catalyses a 1-acyl-sn-glycero-3-phosphocholine = a 1-acyl-sn-glycero-2,3-cyclic phosphate + choline. It catalyses the reaction a 1-acyl-sn-glycero-3-phosphoethanolamine = a 1-acyl-sn-glycero-2,3-cyclic phosphate + ethanolamine. Dermonecrotic toxins cleave the phosphodiester linkage between the phosphate and headgroup of certain phospholipids (sphingolipid and lysolipid substrates), forming an alcohol (often choline) and a cyclic phosphate. This toxin acts on sphingomyelin (SM). It may also act on ceramide phosphoethanolamine (CPE), lysophosphatidylcholine (LPC) and lysophosphatidylethanolamine (LPE), but not on lysophosphatidylserine (LPS), and lysophosphatidylglycerol (LPG). It acts by transphosphatidylation, releasing exclusively cyclic phosphate products as second products. Induces dermonecrosis, hemolysis, increased vascular permeability, edema, inflammatory response, and platelet aggregation. The sequence is that of Dermonecrotic toxin LhSicTox-alphaIV1iii from Loxosceles hirsuta (Recluse spider).